The following is a 157-amino-acid chain: Peptide methionine sulfoxide reductase MsrA (157 aa).

The active site involves cysteine 10.

It belongs to the MsrA Met sulfoxide reductase family.

It catalyses the reaction L-methionyl-[protein] + [thioredoxin]-disulfide + H2O = L-methionyl-(S)-S-oxide-[protein] + [thioredoxin]-dithiol. The catalysed reaction is [thioredoxin]-disulfide + L-methionine + H2O = L-methionine (S)-S-oxide + [thioredoxin]-dithiol. Its function is as follows. Has an important function as a repair enzyme for proteins that have been inactivated by oxidation. Catalyzes the reversible oxidation-reduction of methionine sulfoxide in proteins to methionine. This is Peptide methionine sulfoxide reductase MsrA from Clostridium botulinum (strain Loch Maree / Type A3).